Consider the following 630-residue polypeptide: Plastin-3 (630 aa).

EF-hand domains follow at residues 12 to 47 (DELD…ANMP) and 52 to 87 (KVRE…VKSS). The Ca(2+) site is built by Asp-25, Asn-27, Asn-29, Glu-36, Asp-65, Asn-67, Asp-69, Lys-71, and Glu-76. 2 actin-binding regions span residues 109 to 382 (TSEL…ALTK) and 383 to 627 (PENQ…GRGM). Calponin-homology (CH) domains lie at 123-239 (EEEK…KIGL) and 267-378 (LSPE…NKYP). Ser-268, Ser-293, Ser-326, and Ser-339 each carry phosphoserine. A Phosphothreonine modification is found at Thr-391. Calponin-homology (CH) domains follow at residues 397–506 (TREE…RRYT) and 518–627 (KATD…GRGM).

Monomer.

It is found in the cytoplasm. Actin-bundling protein. The polypeptide is Plastin-3 (Pls3) (Rattus norvegicus (Rat)).